A 194-amino-acid polypeptide reads, in one-letter code: Ribonuclease HII (194 aa).

In terms of domain architecture, RNase H type-2 spans 3-193; the sequence is ILTAGVDEAG…VRNLLAQQTL (191 aa). A divalent metal cation-binding residues include aspartate 9, glutamate 10, and aspartate 101.

This sequence belongs to the RNase HII family. Mn(2+) is required as a cofactor. Mg(2+) serves as cofactor.

It localises to the cytoplasm. It catalyses the reaction Endonucleolytic cleavage to 5'-phosphomonoester.. Functionally, endonuclease that specifically degrades the RNA of RNA-DNA hybrids. The protein is Ribonuclease HII of Neisseria meningitidis serogroup C (strain 053442).